A 201-amino-acid polypeptide reads, in one-letter code: Transmembrane 4 L6 family member 18 (201 aa).

Residues 1-9 (MGSRKCGGC) are Cytoplasmic-facing. A helical membrane pass occupies residues 10 to 30 (LSCLLIPLALWSIIVNILLYF). The Extracellular portion of the chain corresponds to 31–49 (PNGQTSYASSNKLTNYVWY). A helical transmembrane segment spans residues 50–70 (FEGICFSGIMMLIVTTVLLVL). The Cytoplasmic portion of the chain corresponds to 71-93 (ENNNNYKCCQSENCSKKYVTLLS). The helical transmembrane segment at 94–114 (IIFSSLGIAFSGYCLVISALG) threads the bilayer. Residues 115–157 (LVQGPYCRTLDGWEYAFEGTAGRFLTDSSIWIQCLEPAHVVEW) are Extracellular-facing. A helical transmembrane segment spans residues 158–178 (NIILFSILITLSGLQVIICLI). Residues 179 to 201 (RVVMQLSKILCGSYSVIFQPGII) are Cytoplasmic-facing.

This sequence belongs to the L6 tetraspanin family.

It localises to the membrane. The chain is Transmembrane 4 L6 family member 18 (TM4SF18) from Homo sapiens (Human).